Consider the following 474-residue polypeptide: PTS system N-acetylmuramic acid-specific EIIBC component (474 aa).

The PTS EIIB type-1 domain occupies 1 to 89; it reads MAKEISSELL…SELLGEAPVQ (89 aa). The Cytoplasmic segment spans residues 1 to 123; it reads MAKEISSELL…LAKFATIFTP (123 aa). The Phosphocysteine intermediate; for EIIB activity role is filled by cysteine 29. Residues 115 to 474 enclose the PTS EIIC type-1 domain; sequence AKFATIFTPL…LFGCRNVNLD (360 aa). A helical membrane pass occupies residues 124–144; sequence LIPGFIAAGLLLGIATLIATV. The Periplasmic portion of the chain corresponds to 145–157; sequence MHVPADAQGTLPD. Residues 158–178 traverse the membrane as a helical segment; that stretch reads ALNFMKVFSKGLFTFLVILVG. The Cytoplasmic segment spans residues 179-180; the sequence is YN. Residues 181–201 traverse the membrane as a helical segment; that stretch reads AAQAFGGTGVNGAIIAALFLL. The Periplasmic portion of the chain corresponds to 202 to 217; it reads GYNPAATTGYYAGFHD. A helical transmembrane segment spans residues 218-238; the sequence is FFGLPIDPRGNIIGVLIAAWA. At 239 to 260 the chain is on the cytoplasmic side; the sequence is CARIEGMVRRFMPDDLDMLLTS. The helical transmembrane segment at 261-281 threads the bilayer; sequence LITLLITATLAYLIIMPLGGW. Residues 282–301 are Periplasmic-facing; sequence LFEGMSWLFMHLNSNPFGCA. Residues 302–322 traverse the membrane as a helical segment; it reads VLAGLFLIAVVFGVHQGFIPV. Over 323–334 the chain is Cytoplasmic; it reads YLALMDSQGFNS. Residues 335-355 form a helical membrane-spanning segment; that stretch reads LFPILSMAGAGQVGAALALYW. The Periplasmic portion of the chain corresponds to 356 to 368; sequence RAQPHSALRSQVR. Residues 369–389 form a helical membrane-spanning segment; sequence GAIIPGLLGVGEPLIYGVTLP. Over 390–393 the chain is Cytoplasmic; sequence RMKP. The chain crosses the membrane as a helical span at residues 394-414; the sequence is FVTACLGGAAGGLFIGLIAWW. Topologically, residues 415-440 are periplasmic; sequence GLPMGLNSAFGPSGLVALPLMTSAQG. The chain crosses the membrane as a helical span at residues 441–461; the sequence is ILPAMAVYAGGILVAWVCGFI. The Cytoplasmic portion of the chain corresponds to 462–474; that stretch reads FTTLFGCRNVNLD.

The protein resides in the cell inner membrane. It catalyses the reaction N-acetyl-beta-D-muramate(out) + N(pros)-phospho-L-histidyl-[protein] = N-acetyl-beta-D-muramate 6-phosphate(in) + L-histidyl-[protein]. The phosphoenolpyruvate-dependent sugar phosphotransferase system (sugar PTS), a major carbohydrate active transport system, catalyzes the phosphorylation of incoming sugar substrates concomitantly with their translocation across the cell membrane. This system is involved in N-acetylmuramic acid (MurNAc) transport, yielding cytoplasmic MurNAc-6-P. Is responsible for growth on MurNAc as the sole source of carbon and energy. Is also able to take up anhydro-N-acetylmuramic acid (anhMurNAc), but cannot phosphorylate the carbon 6, probably because of the 1,6-anhydro ring. This Escherichia coli (strain K12) protein is PTS system N-acetylmuramic acid-specific EIIBC component (murP).